A 270-amino-acid chain; its full sequence is Protein ABHD14A (270 aa).

Residues 9 to 29 form a helical; Signal-anchor for type II membrane protein membrane-spanning segment; the sequence is LVVLGLVLLATVLLYLLLPSM. Residue asparagine 61 is glycosylated (N-linked (GlcNAc...) asparagine). Residues serine 170 and aspartate 221 each act as charge relay system in the active site. Asparagine 237 carries N-linked (GlcNAc...) asparagine glycosylation. Histidine 248 serves as the catalytic Charge relay system.

Belongs to the AB hydrolase superfamily. ABHD14 family.

The protein localises to the cytoplasm. The protein resides in the membrane. Its function is as follows. Possible role in granule neuron development. This is Protein ABHD14A from Danio rerio (Zebrafish).